The following is a 188-amino-acid chain: Large ribosomal subunit protein uL5 (188 aa).

Belongs to the universal ribosomal protein uL5 family. As to quaternary structure, part of the 50S ribosomal subunit; contacts the 5S rRNA and probably tRNA. Forms a bridge to the 30S subunit in the 70S ribosome.

In terms of biological role, this is one of the proteins that bind and probably mediate the attachment of the 5S RNA into the large ribosomal subunit, where it forms part of the central protuberance. In the 70S ribosome it contacts protein S13 of the 30S subunit (bridge B1b), connecting the 2 subunits; this bridge is implicated in subunit movement. May contact the P site tRNA; the 5S rRNA and some of its associated proteins might help stabilize positioning of ribosome-bound tRNAs. This chain is Large ribosomal subunit protein uL5, found in Pyrococcus abyssi (strain GE5 / Orsay).